Consider the following 286-residue polypeptide: Lipoyl synthase (286 aa).

Residues Cys34, Cys39, Cys45, Cys60, Cys64, Cys67, and Ser271 each coordinate [4Fe-4S] cluster. A Radical SAM core domain is found at 46 to 260 (WESGTATFMI…EESAYSIGFS (215 aa)).

It belongs to the radical SAM superfamily. Lipoyl synthase family. The cofactor is [4Fe-4S] cluster.

Its subcellular location is the cytoplasm. It catalyses the reaction [[Fe-S] cluster scaffold protein carrying a second [4Fe-4S](2+) cluster] + N(6)-octanoyl-L-lysyl-[protein] + 2 oxidized [2Fe-2S]-[ferredoxin] + 2 S-adenosyl-L-methionine + 4 H(+) = [[Fe-S] cluster scaffold protein] + N(6)-[(R)-dihydrolipoyl]-L-lysyl-[protein] + 4 Fe(3+) + 2 hydrogen sulfide + 2 5'-deoxyadenosine + 2 L-methionine + 2 reduced [2Fe-2S]-[ferredoxin]. It functions in the pathway protein modification; protein lipoylation via endogenous pathway; protein N(6)-(lipoyl)lysine from octanoyl-[acyl-carrier-protein]: step 2/2. Functionally, catalyzes the radical-mediated insertion of two sulfur atoms into the C-6 and C-8 positions of the octanoyl moiety bound to the lipoyl domains of lipoate-dependent enzymes, thereby converting the octanoylated domains into lipoylated derivatives. In Picrophilus torridus (strain ATCC 700027 / DSM 9790 / JCM 10055 / NBRC 100828 / KAW 2/3), this protein is Lipoyl synthase.